We begin with the raw amino-acid sequence, 298 residues long: Small ribosomal subunit protein uS2 (298 aa).

The disordered stretch occupies residues 240–298 (AGENWDTQAPGAGVPGSAFAAASAAAATSWEADGGDWAASSAPPAGESWAETQPTEAKW). The segment covering 248-271 (APGAGVPGSAFAAASAAAATSWEA) has biased composition (low complexity). Over residues 289-298 (AETQPTEAKW) the composition is skewed to polar residues.

The protein belongs to the universal ribosomal protein uS2 family. Component of the small ribosomal subunit. Mature ribosomes consist of a small (40S) and a large (60S) subunit. The 40S subunit contains about 33 different proteins and 1 molecule of RNA (18S). The 60S subunit contains about 49 different proteins and 3 molecules of RNA (25S, 5.8S and 5S). Interacts with rps21.

The protein localises to the cytoplasm. In terms of biological role, required for the assembly and/or stability of the 40S ribosomal subunit. Required for the processing of the 20S rRNA-precursor to mature 18S rRNA in a late step of the maturation of 40S ribosomal subunits. The polypeptide is Small ribosomal subunit protein uS2 (rps0) (Aspergillus clavatus (strain ATCC 1007 / CBS 513.65 / DSM 816 / NCTC 3887 / NRRL 1 / QM 1276 / 107)).